The sequence spans 306 residues: Aquaporin-1 (306 aa).

The segment covering 1–23 has biased composition (polar residues); that stretch reads MASTHSSLTTVQNNANNKSNRTL. The interval 1–24 is disordered; that stretch reads MASTHSSLTTVQNNANNKSNRTLN. Residues 1 to 59 lie on the Cytoplasmic side of the membrane; it reads MASTHSSLTTVQNNANNKSNRTLNTERRLSMESSVFTLYNKAADELDTSQRSAFQACHR. Residues 60 to 80 form a helical membrane-spanning segment; it reads EFLAEFIGTVILVLLTCGFCA. Residues 81–92 lie on the Extracellular side of the membrane; that stretch reads EQTLHIEESKSW. A helical transmembrane segment spans residues 93-113; the sequence is LTSSFGSGLSVLIGICVSGHV. The Cytoplasmic portion of the chain corresponds to 114–145; it reads SGAHLNPAVTIAFCIFSGFPIRKVPSYITAQL. Positions 119–121 match the NPA 1 motif; it reads NPA. The helical transmembrane segment at 146-166 threads the bilayer; that stretch reads LGAFAGAALLYIIIEPAIVQF. Residues 167-192 lie on the Extracellular side of the membrane; that stretch reads DGGQRYILGEKSTAGIFGTYPPLYVG. The chain crosses the membrane as a helical span at residues 193-213; the sequence is IGSAIASEIMGTAMLLLVIMV. The Cytoplasmic segment spans residues 214 to 226; the sequence is TGHPNNLPYKSAQ. Residues 227 to 247 traverse the membrane as a helical segment; it reads GAMIALGITTISLCIGYTSGF. At 248-278 the chain is on the extracellular side; the sequence is SLNPARDFGPRLFTAIAGWGFDVFKVYHYYA. Residues 250–252 carry the NPA 2 motif; that stretch reads NPA. A helical transmembrane segment spans residues 279-299; that stretch reads LVPMFAPILGGLVGLMLMMPF. Residues 300–306 lie on the Cytoplasmic side of the membrane; that stretch reads SFLSVRA.

It belongs to the MIP/aquaporin (TC 1.A.8) family.

It is found in the cell membrane. It catalyses the reaction H2O(in) = H2O(out). In terms of biological role, water channel required to facilitate the transport of water across membranes. Contributes to water uptake of spores during the early stages of spore germination. Aquaporins AQP1 and AQP2 act as extracellular pH sensors and enable the spores to hydrate under favorable conditions and to commence germination. Wounded vegetables and fruit present acidic pH, so the optimal pH range for germination is adapted to the relevant host pH. In Rhizopus delemar (strain RA 99-880 / ATCC MYA-4621 / FGSC 9543 / NRRL 43880) (Mucormycosis agent), this protein is Aquaporin-1.